The primary structure comprises 881 residues: Alanine--tRNA ligase (881 aa).

Zn(2+) is bound by residues histidine 564, histidine 568, cysteine 673, and histidine 677. A disordered region spans residues 848 to 867 (GQGGGGRPDMAQAGGPDGDK).

This sequence belongs to the class-II aminoacyl-tRNA synthetase family. Zn(2+) is required as a cofactor.

The protein localises to the cytoplasm. It catalyses the reaction tRNA(Ala) + L-alanine + ATP = L-alanyl-tRNA(Ala) + AMP + diphosphate. Catalyzes the attachment of alanine to tRNA(Ala) in a two-step reaction: alanine is first activated by ATP to form Ala-AMP and then transferred to the acceptor end of tRNA(Ala). Also edits incorrectly charged Ser-tRNA(Ala) and Gly-tRNA(Ala) via its editing domain. The protein is Alanine--tRNA ligase of Hyphomonas neptunium (strain ATCC 15444).